The sequence spans 130 residues: Cholecystokinin (130 aa).

A signal peptide spans 1–20 (MYSGICIYMFLAMLSTSSSG). A propeptide spanning residues 21–60 (QQATGSHNENPVATELEQSLTEHHRHVRVPSSAGQLKPIQ) is cleaved from the precursor. Sulfotyrosine is present on Tyr112. Phe118 carries the phenylalanine amide modification. Residues 122 to 130 (SAEEYEYSS) constitute a propeptide that is removed on maturation. 2 positions are modified to sulfotyrosine: Tyr126 and Tyr128.

The protein belongs to the gastrin/cholecystokinin family. The precursor is cleaved by proteases to produce a number of active cholecystokinins. As to expression, expressed in brain, duodenum and small intestine.

It localises to the secreted. Its function is as follows. This peptide hormone induces gall bladder contraction and the release of pancreatic enzymes in the gut. Its function in the brain is not clear. This chain is Cholecystokinin, found in Trachemys scripta (Red-eared slider turtle).